We begin with the raw amino-acid sequence, 537 residues long: Glutamyl-tRNA reductase, chloroplastic (537 aa).

A chloroplast-targeting transit peptide spans 1 to 48; it reads MMASTTSATAAGGAFAAAKTRAGSSAAGGGACARVAAGGRRRSGVVVR. Residues 134-137, Ser-194, 199-201, and Gln-205 contribute to the substrate site; these read TCNR and EGQ. The active-site Nucleophile is the Cys-135. 276 to 281 is an NADP(+) binding site; sequence GAGKMG.

The protein belongs to the glutamyl-tRNA reductase family.

The protein localises to the plastid. It localises to the chloroplast. It catalyses the reaction (S)-4-amino-5-oxopentanoate + tRNA(Glu) + NADP(+) = L-glutamyl-tRNA(Glu) + NADPH + H(+). Its pathway is porphyrin-containing compound metabolism; protoporphyrin-IX biosynthesis; 5-aminolevulinate from L-glutamyl-tRNA(Glu): step 1/2. Catalyzes the NADPH-dependent reduction of glutamyl-tRNA(Glu) to glutamate 1-semialdehyde (GSA). The protein is Glutamyl-tRNA reductase, chloroplastic of Oryza sativa subsp. indica (Rice).